The following is a 133-amino-acid chain: Snaclec echicetin subunit alpha (133 aa).

Disulfide bonds link Cys-4/Cys-15, Cys-31/Cys-127, and Cys-102/Cys-119. Residues 11 to 128 (YEGHCYQLFR…CEFKFPFVCK (118 aa)) form the C-type lectin domain.

This sequence belongs to the snaclec family. As to quaternary structure, heterodimer of subunits alpha and beta; disulfide-linked. Forms an active complex with the pentameric immunoglobuline Mkappa (IgMkappa). Expressed by the venom gland.

The protein resides in the secreted. Its function is as follows. Echicetin itself inhibits aggregation of washed platelets induced by vWF, thrombin or alboaggregin-A. However, when complexed with the pentameric plasma immunoglobulin Mkappa (IgMkappa), echicetin binds specifically to GPIb and activates platelets. This is caused by P-selectin expression and activation of alpha-IIb/beta-3 as well as tyrosine phosphorylation of several signal transduction molecules, including p53/56(LYN), p64, p72(SYK), p70 to p90, and p120. In vivo, it induces thrombocytopenia when injected into mice, probably accounting of activation of platelets rather than inhibition. This Echis carinatus sochureki (Saw-scaled viper) protein is Snaclec echicetin subunit alpha.